Reading from the N-terminus, the 72-residue chain is Large ribosomal subunit protein uL29 (72 aa).

Belongs to the universal ribosomal protein uL29 family.

This is Large ribosomal subunit protein uL29 (rpmC) from Treponema pallidum (strain Nichols).